Here is a 364-residue protein sequence, read N- to C-terminus: Probable dual-specificity RNA methyltransferase RlmN (364 aa).

Catalysis depends on Glu107, which acts as the Proton acceptor. A Radical SAM core domain is found at 113 to 346; it reads HDYGNSVCVT…ATIRREQGSD (234 aa). A disulfide bridge connects residues Cys120 and Cys351. [4Fe-4S] cluster contacts are provided by Cys127, Cys131, and Cys134. S-adenosyl-L-methionine-binding positions include 177–178, Ser209, 232–234, and Asn308; these read GE and SLH. Cys351 functions as the S-methylcysteine intermediate in the catalytic mechanism.

This sequence belongs to the radical SAM superfamily. RlmN family. It depends on [4Fe-4S] cluster as a cofactor.

It is found in the cytoplasm. It carries out the reaction adenosine(2503) in 23S rRNA + 2 reduced [2Fe-2S]-[ferredoxin] + 2 S-adenosyl-L-methionine = 2-methyladenosine(2503) in 23S rRNA + 5'-deoxyadenosine + L-methionine + 2 oxidized [2Fe-2S]-[ferredoxin] + S-adenosyl-L-homocysteine. The catalysed reaction is adenosine(37) in tRNA + 2 reduced [2Fe-2S]-[ferredoxin] + 2 S-adenosyl-L-methionine = 2-methyladenosine(37) in tRNA + 5'-deoxyadenosine + L-methionine + 2 oxidized [2Fe-2S]-[ferredoxin] + S-adenosyl-L-homocysteine. Its function is as follows. Specifically methylates position 2 of adenine 2503 in 23S rRNA and position 2 of adenine 37 in tRNAs. Confers resistance to some classes of antibiotics. The polypeptide is Probable dual-specificity RNA methyltransferase RlmN (Staphylococcus aureus (strain bovine RF122 / ET3-1)).